Reading from the N-terminus, the 739-residue chain is DNA ligase (739 aa).

34 to 38 (DADYD) lines the NAD(+) pocket. The segment covering 49–59 (ARFPHLKRPDS) has biased composition (basic and acidic residues). Positions 49-70 (ARFPHLKRPDSPSEQVGARPGE) are disordered. Residues 83–84 (SL) and Glu117 contribute to the NAD(+) site. Lys119 acts as the N6-AMP-lysine intermediate in catalysis. NAD(+)-binding residues include Arg140, Glu175, Lys291, and Lys315. Zn(2+) contacts are provided by Cys420, Cys423, Cys438, and Cys444. Positions 660–739 (ARDSPVAGKT…DGWLKLIEGL (80 aa)) constitute a BRCT domain.

Belongs to the NAD-dependent DNA ligase family. LigA subfamily. It depends on Mg(2+) as a cofactor. Requires Mn(2+) as cofactor.

It catalyses the reaction NAD(+) + (deoxyribonucleotide)n-3'-hydroxyl + 5'-phospho-(deoxyribonucleotide)m = (deoxyribonucleotide)n+m + AMP + beta-nicotinamide D-nucleotide.. Functionally, DNA ligase that catalyzes the formation of phosphodiester linkages between 5'-phosphoryl and 3'-hydroxyl groups in double-stranded DNA using NAD as a coenzyme and as the energy source for the reaction. It is essential for DNA replication and repair of damaged DNA. This chain is DNA ligase, found in Ruegeria pomeroyi (strain ATCC 700808 / DSM 15171 / DSS-3) (Silicibacter pomeroyi).